We begin with the raw amino-acid sequence, 618 residues long: UvrABC system protein C (618 aa).

In terms of domain architecture, GIY-YIG spans 13-92; the sequence is DKPGVYLMKN…IKKYRPKYNI (80 aa). In terms of domain architecture, UVR spans 204-239; it reads LDIVENFKLNMEKAAENLEFEKAAMLRDKINIIEKI.

It belongs to the UvrC family. Interacts with UvrB in an incision complex.

Its subcellular location is the cytoplasm. In terms of biological role, the UvrABC repair system catalyzes the recognition and processing of DNA lesions. UvrC both incises the 5' and 3' sides of the lesion. The N-terminal half is responsible for the 3' incision and the C-terminal half is responsible for the 5' incision. The polypeptide is UvrABC system protein C (Clostridium botulinum (strain ATCC 19397 / Type A)).